Reading from the N-terminus, the 1733-residue chain is Probable nuclear antigen (1733 aa).

10 disordered regions span residues 1–41 (MNLF…THFT), 71–394 (PHPP…EQQV), 437–506 (AGAG…EGAQ), 520–548 (APAA…EGGA), 882–907 (LGGG…GAAL), 993–1141 (AGGP…EDAA), 1223–1242 (PERV…RGHA), 1348–1475 (GAGP…GRAG), 1585–1608 (SGGG…WGSG), and 1630–1665 (PRRR…RGGC). A compositionally biased stretch (basic residues) spans 21 to 31 (DHHHQQHHHHP). Positions 77–97 (PQDHHRPTPARDHRDPRDHLP) are enriched in basic and acidic residues. The span at 113 to 131 (TTTTTIKDPQHPQDPLLLP) shows a compositional bias: low complexity. The span at 135 to 147 (LQEEDPHLLRPTR) shows a compositional bias: basic and acidic residues. Pro residues predominate over residues 179–189 (GGGPPSPPPRP). Residues 190 to 201 (STSSSSSHQGPP) show a composition bias toward low complexity. Pro residues predominate over residues 202 to 220 (STRPPPPQRPPPRWPPPSP). Positions 227-240 (RAGSENTAQTLFSH) are enriched in polar residues. A compositionally biased stretch (pro residues) spans 272–299 (PPPSPPPRPPPPLPPPPPPPPPPQPPPA). Positions 316-326 (GGRRRGGKRRR) are enriched in basic residues. Acidic residues predominate over residues 336-354 (DAEEEEDGDGDEDEDEDRA). The span at 355–364 (EGEGREDGGE) shows a compositional bias: basic and acidic residues. 3 stretches are compositionally biased toward gly residues: residues 365–374 (GPRGAGGGAG), 454–466 (GAPG…GLEG), and 479–494 (GGDG…GLGV). Low complexity predominate over residues 495–506 (GLQQRRGAEGAQ). Gly residues predominate over residues 882–892 (LGGGGGGGQQR). The segment covering 893-907 (GSGVRSGPESEGAAL) has biased composition (low complexity). 2 stretches are compositionally biased toward gly residues: residues 993–1004 (AGGPGAGEAGGG) and 1027–1043 (AGRG…LGEP). 2 stretches are compositionally biased toward basic and acidic residues: residues 1078–1087 (GAGDEGDRVR) and 1100–1112 (RVAE…RHLL). Gly residues predominate over residues 1116–1127 (GPEGGRGAGGRG). Residues 1385 to 1407 (GPGGLRGRGRGGRGGGGGGGGRG) are compositionally biased toward gly residues. Basic residues-rich tracts occupy residues 1408–1420 (PRGR…RRWR) and 1444–1453 (RGGRGGRGGR). The segment covering 1454-1474 (GRGGGRAPRGGGGGPGGGGRA) has biased composition (gly residues). Gly residues predominate over residues 1652–1665 (RGAGRAGGGGRGGC).

In Sus scrofa (Pig), this protein is Probable nuclear antigen.